A 287-amino-acid polypeptide reads, in one-letter code: Hydroxysteroid 11-beta-dehydrogenase 1-like protein (287 aa).

The first 22 residues, 1–22 (MKLYAKLLLCSICVAFIAVRWS), serve as a signal peptide directing secretion. Residues 40–66 (GASTGIGEQLAYHYARLGAQIVITARR), 91–92 (DM), and 118–120 (NHI) contribute to the NADP(+) site. Residue S169 participates in substrate binding. Y182 (proton acceptor) is an active-site residue. Residues 182–186 (YASTK) and 215–221 (GLIDTDS) contribute to the NADP(+) site.

It belongs to the short-chain dehydrogenases/reductases (SDR) family.

It localises to the secreted. The catalysed reaction is cortisone + NADPH + H(+) = cortisol + NADP(+). Functionally, unidirectional NADP(+)-dependent cortisol dehydrogenase (in vitro). This Danio rerio (Zebrafish) protein is Hydroxysteroid 11-beta-dehydrogenase 1-like protein (hsd11b1l).